Reading from the N-terminus, the 250-residue chain is Ribonucleotide monophosphatase NagD (250 aa).

Residues Asp-9 and Asp-11 each coordinate Mg(2+). Asp-11 is an active-site residue. Substrate contacts are provided by residues Asp-11, 42-43, and Lys-176; that span reads TN. A Mg(2+)-binding site is contributed by Asp-201. 202 to 205 is a substrate binding site; the sequence is NLRT.

The protein belongs to the HAD-like hydrolase superfamily. NagD family. In terms of assembly, monomer. Requires Mg(2+) as cofactor. The cofactor is Mn(2+). It depends on Co(2+) as a cofactor. Zn(2+) serves as cofactor.

It carries out the reaction a ribonucleoside 5'-phosphate + H2O = a ribonucleoside + phosphate. Catalyzes the dephosphorylation of an unusually broad range of substrate including deoxyribo- and ribonucleoside tri-, di-, and monophosphates, as well as polyphosphate and glucose-1-P (Glu1P). In Escherichia coli O157:H7, this protein is Ribonucleotide monophosphatase NagD (nagD).